A 207-amino-acid polypeptide reads, in one-letter code: Vexin (207 aa).

The interval 56-100 (ELLPHRGDRRDPGDRRRFGRLQTARPPTAHPAKASARPVGISEPK) is disordered. The span at 58–71 (LPHRGDRRDPGDRR) shows a compositional bias: basic and acidic residues.

This sequence belongs to the vexin family.

Its subcellular location is the cell membrane. It is found in the nucleus. Its function is as follows. Required for neurogenesis in the neural plate and retina. Strongly cooperates with neural bHLH factors to promote neurogenesis. The protein is Vexin of Homo sapiens (Human).